The following is a 277-amino-acid chain: MHIIETQDLCHTYKGNIDALKNISFIAPRNTRIAIIGPNGAGKSTLFKHFNGVLKPTSGKVLIRGEPITKENIREVRRTVGLVFQNPDDQIFSPTVEQDVAFGPINMGLDEEAVKHRVSEALRTVGLSEYRTRVPHHLSGGEKKRVAIAGIIAMEPQVLVLDEPTAGLDPQGVREIIRFIRDFSVRYGMTVIFSTHNISLVAELAEYIYVMNNGSFVAEGTVAEIFSQPDLLSSVRLDLPILPKLISSLRSKGIAIDMGYTYQEAEIAFLKAFGKIA.

The region spanning 4-238 (IETQDLCHTY…PDLLSSVRLD (235 aa)) is the ABC transporter domain. 37-44 (GPNGAGKS) lines the ATP pocket.

This sequence belongs to the ABC transporter superfamily. Energy-coupling factor EcfA family. Forms a stable energy-coupling factor (ECF) transporter complex composed of 2 membrane-embedded substrate-binding proteins (S component), 2 ATP-binding proteins (A component) and 2 transmembrane proteins (T component).

It is found in the cell membrane. Its function is as follows. ATP-binding (A) component of a common energy-coupling factor (ECF) ABC-transporter complex. Unlike classic ABC transporters this ECF transporter provides the energy necessary to transport a number of different substrates. The polypeptide is Energy-coupling factor transporter ATP-binding protein EcfA1 (Methanospirillum hungatei JF-1 (strain ATCC 27890 / DSM 864 / NBRC 100397 / JF-1)).